The chain runs to 528 residues: Bifunctional purine biosynthesis protein PurH (528 aa).

In terms of domain architecture, MGS-like spans 2–149 (TDLAPLRRAL…KNHGFVSVVV (148 aa)).

This sequence belongs to the PurH family.

The enzyme catalyses (6R)-10-formyltetrahydrofolate + 5-amino-1-(5-phospho-beta-D-ribosyl)imidazole-4-carboxamide = 5-formamido-1-(5-phospho-D-ribosyl)imidazole-4-carboxamide + (6S)-5,6,7,8-tetrahydrofolate. It catalyses the reaction IMP + H2O = 5-formamido-1-(5-phospho-D-ribosyl)imidazole-4-carboxamide. Its pathway is purine metabolism; IMP biosynthesis via de novo pathway; 5-formamido-1-(5-phospho-D-ribosyl)imidazole-4-carboxamide from 5-amino-1-(5-phospho-D-ribosyl)imidazole-4-carboxamide (10-formyl THF route): step 1/1. It participates in purine metabolism; IMP biosynthesis via de novo pathway; IMP from 5-formamido-1-(5-phospho-D-ribosyl)imidazole-4-carboxamide: step 1/1. This Roseobacter denitrificans (strain ATCC 33942 / OCh 114) (Erythrobacter sp. (strain OCh 114)) protein is Bifunctional purine biosynthesis protein PurH.